Here is a 266-residue protein sequence, read N- to C-terminus: Basic endochitinase C (266 aa).

Positions 1–23 are cleaved as a signal peptide; sequence MRSLAVVVAVVATVAMAIGTAHG. Cystine bridges form between Cys-46–Cys-108, Cys-120–Cys-128, and Cys-246–Cys-259. Glu-90 (proton donor) is an active-site residue.

Belongs to the glycosyl hydrolase 19 family. Chitinase class II subfamily. As to expression, localized to the starchy endoderm of the seed May localize to other parts of the seed including the aleurone cells (at protein level).

It catalyses the reaction Random endo-hydrolysis of N-acetyl-beta-D-glucosaminide (1-&gt;4)-beta-linkages in chitin and chitodextrins.. Defense against chitin-containing fungal pathogens. Binds the hyphal tips of fungi and degrades nascent chitin. This chain is Basic endochitinase C, found in Secale cereale (Rye).